Here is a 3971-residue protein sequence, read N- to C-terminus: Mycosubtilin synthase subunit A (3971 aa).

Residues 160 to 479 (EPEADELAFI…ELEDIDLGRV (320 aa)) are acyl-CoA ligase. The Carrier 1 domain occupies 578–653 (TPIHEIETAL…DLAAFLVENH (76 aa)). Serine 613 carries the O-(pantetheine 4'-phosphoryl)serine modification. The region spanning 669–1092 (SKDIAIIGMS…GTNAHVVLEE (424 aa)) is the Ketosynthase family 3 (KS3) domain. Residues cysteine 843, histidine 974, and histidine 1014 each act as for beta-ketoacyl synthase activity in the active site. In terms of domain architecture, Carrier 2 spans 1290 to 1365 (THIESFLKTV…SVVDYLAENV (76 aa)). An O-(pantetheine 4'-phosphoryl)serine modification is found at serine 1324. The interval 1434 to 1456 (ESEISQDKTSLSPKSVTAKKNSA) is disordered. Residues 1440–1456 (DKTSLSPKSVTAKKNSA) are compositionally biased toward polar residues. The GSA-AT stretch occupies residues 1529–1856 (IIAERSDGSR…SYFEQSQVPI (328 aa)). Residue lysine 1759 is modified to N6-(pyridoxal phosphate)lysine. Positions 1921-1942 (GGFIPEGPDSPNDGGHKEPETY) are disordered. Residues 1938 to 2240 (EPETYELSPE…NMVPVKNTAS (303 aa)) form a condensation 1 region. The 76-residue stretch at 2405–2480 (EPENETELQI…ELANFIRGEK (76 aa)) folds into the Carrier 3 domain. Serine 2440 carries the O-(pantetheine 4'-phosphoryl)serine modification. The tract at residues 2492-2781 (QKAFYRTSPA…QTMGIRTKPQ (290 aa)) is condensation 2. The interval 2937 to 3823 (PHNDTVCQWF…RNHPAGRKIF (887 aa)) is domain 1 (asparagine-activating). The adenylation 1 stretch occupies residues 2967–3364 (TYGQLNERVN…KVEAVQKAVV (398 aa)). One can recognise a Carrier 4 domain in the interval 3442 to 3517 (PPGNEVESKL…QLANMALRME (76 aa)). Serine 3477 carries the O-(pantetheine 4'-phosphoryl)serine modification. Positions 3529–3818 (KISYYPVSSA…NTLVIRNHPA (290 aa)) are condensation 3.

This sequence belongs to the ATP-dependent AMP-binding enzyme family. Pyridoxal 5'-phosphate serves as cofactor. Requires pantetheine 4'-phosphate as cofactor.

Functionally, this protein is a multifunctional enzyme, able to activate a long chain fatty acid and link it with the amino acid Asn as part of the synthesis of mycosubtilin. The activation sites consist of individual domains. The sequence is that of Mycosubtilin synthase subunit A (mycA) from Bacillus subtilis.